A 157-amino-acid chain; its full sequence is F-box protein SNE (157 aa).

An F-box domain is found at 24–70 (PVFSINDHHDVLVEILRRLDGSSLCSAACVCRLWSAVARNDSIWEEL).

Part of a SCF (ASK-cullin-F-box) protein ligase complex. Interacts directly with SKP1A and SKP1B. As to expression, highly expressed in flowers and at much lower level in seedlings, rosette leaves and green siliques.

The protein resides in the nucleus. The protein operates within protein modification; protein ubiquitination. Functionally, essential component of a SCF-type E3 ligase complex that positively regulates the gibberellin signaling pathway. Upon gibberellin treatment, such complex probably mediates the ubiquitination and subsequent degradation of DELLA proteins (GAI, RGA and RGL2), some repressors of the gibberellin pathway, leading to activate the pathway. Can partially complement the absence of GID2/SLY1. This Arabidopsis thaliana (Mouse-ear cress) protein is F-box protein SNE (SNE).